Reading from the N-terminus, the 620-residue chain is E3 ubiquitin-protein ligase AMFR (620 aa).

Transmembrane regions (helical) follow at residues 75-95 (LFVWVMVNTACCILMLIGKVI), 115-135 (FWNFIFYKFIFIFGVLNVQRV), 138-158 (VVLWCLWFSMLIFLHLMVQLC), 179-199 (VLALLVSVLSCCGGLAVLCAL), 201-221 (GHIHGMHTVAFMAAECLLVTV), 247-267 (SSYIYYTDFIMELAILSLDLM), and 269-289 (HIHMLLFGNIWLSMASLVIFM). The RING-type; atypical zinc finger occupies 334–372 (CAICWDSMTTARKLPCGHLFHNSCLRSWLEQDTSCPTCR). In terms of domain architecture, CUE spans 449–491 (QLNGMAHQIQEMFPQVPYHLILQDLQLTRSVEVTTDNILEGRI). The span at 510-526 (ASEDGAGASSGSEVAAP) shows a compositional bias: low complexity. Disordered regions lie at residues 510–544 (ASEDGAGASSGSEVAAPEAEDFEVRGSRFSKSADE) and 569–598 (PEDGDAYSVLGADNDDSVPSIEDEDSDSVT). Basic and acidic residues predominate over residues 531–544 (FEVRGSRFSKSADE). The span at 581–595 (DNDDSVPSIEDEDSD) shows a compositional bias: acidic residues.

As to expression, widely expressed.

It is found in the endoplasmic reticulum membrane. It carries out the reaction [E2 ubiquitin-conjugating enzyme]-S-ubiquitinyl-L-cysteine + [acceptor protein]-L-cysteine = [E2 ubiquitin-conjugating enzyme]-L-cysteine + [acceptor protein]-S-ubiquitinyl-L-cysteine.. Its pathway is protein modification; protein ubiquitination. Functionally, E3 ubiquitin-protein ligase that mediates the polyubiquitination of lysine and cysteine residues on target proteins. May participate in the final step of endoplasmic reticulum-associated degradation (ERAD). Required for proper lipid homeostasis. This is E3 ubiquitin-protein ligase AMFR from Danio rerio (Zebrafish).